A 466-amino-acid chain; its full sequence is Asparagine--tRNA ligase (466 aa).

It belongs to the class-II aminoacyl-tRNA synthetase family. Homodimer.

The protein resides in the cytoplasm. It catalyses the reaction tRNA(Asn) + L-asparagine + ATP = L-asparaginyl-tRNA(Asn) + AMP + diphosphate + H(+). The protein is Asparagine--tRNA ligase of Yersinia pseudotuberculosis serotype O:1b (strain IP 31758).